Consider the following 1620-residue polypeptide: ALK tyrosine kinase receptor (1620 aa).

The first 18 residues, M1 to A18, serve as a signal peptide directing secretion. The Extracellular portion of the chain corresponds to V19–S1038. The tract at residues R48 to D70 is heparin-binding region. Residues N169, N244, N285, N324, N411, N424, N445, N563, N571, and N627 are each glycosylated (N-linked (GlcNAc...) asparagine). The MAM 1 domain maps to L264–E427. The 37-residue stretch at L437 to K473 folds into the LDL-receptor class A domain. One can recognise an MAM 2 domain in the interval F478–L636. The tract at residues P650 to T674 is disordered. Over residues N654–P666 the composition is skewed to basic and acidic residues. Residues C688 and C701 are joined by a disulfide bond. Residue N709 is glycosylated (N-linked (GlcNAc...) asparagine). Residues C783 and C794 are joined by a disulfide bond. N808, N863, N864, and N886 each carry an N-linked (GlcNAc...) asparagine glycan. C906 and C928 are joined by a disulfide. The N-linked (GlcNAc...) asparagine glycan is linked to N986. Intrachain disulfides connect C987–C995, C990–C1006, and C1008–C1021. The interval C987 to P1025 is EGF-like. The helical transmembrane segment at V1039–Y1059 threads the bilayer. The Cytoplasmic segment spans residues R1060 to P1620. A phosphotyrosine mark is found at Y1078, Y1092, and Y1096. A Protein kinase domain is found at I1116 to V1392. ATP is bound at residue H1124. Y1131 bears the Phosphotyrosine mark. ATP-binding positions include K1150 and E1197–M1199. The active-site Proton acceptor is the D1249. D1270 lines the ATP pocket. Y1278 carries the post-translational modification Phosphotyrosine. Residues E1408–V1463 form a disordered region. The span at K1410–E1419 shows a compositional bias: basic and acidic residues. Y1507 carries the post-translational modification Phosphotyrosine. The interval K1514–T1540 is disordered. Y1604 is modified (phosphotyrosine).

Belongs to the protein kinase superfamily. Tyr protein kinase family. Insulin receptor subfamily. Homodimer; homodimerizes following heparin- and ligand-binding. Interacts with CBL, IRS1, PIK3R1 and PLCG1. Interacts with FRS2 and SHC1. Interacts with PTN and MDK. Post-translationally, phosphorylated at tyrosine residues by autocatalysis, which activates kinase activity. In cells not stimulated by a ligand, receptor protein tyrosine phosphatase beta and zeta complex (PTPRB/PTPRZ1) dephosphorylates ALK at the sites in ALK that are undergoing autophosphorylation through autoactivation. Phosphorylation at Tyr-1507 is critical for SHC1 association. N-glycosylated. Expressed in brain and CNS. Also expressed in the small intestine and testis, but not in normal lymphoid cells.

It is found in the cell membrane. The catalysed reaction is L-tyrosyl-[protein] + ATP = O-phospho-L-tyrosyl-[protein] + ADP + H(+). Activated upon ALKAL2 ligand-binding. ALKAL2-driven activation is coupled with heparin-binding. Following ligand-binding, homodimerizes and autophosphorylates, activating its kinase activity. Inactivated through dephosphorylation by receptor protein tyrosine phosphatase beta and zeta complex (PTPRB/PTPRZ1) when there is no stimulation by a ligand. Staurosporine, crizotinib and CH5424802 act as inhibitors of ALK kinase activity. Its function is as follows. Neuronal receptor tyrosine kinase that is essentially and transiently expressed in specific regions of the central and peripheral nervous systems and plays an important role in the genesis and differentiation of the nervous system. Also acts as a key thinness protein involved in the resistance to weight gain: in hypothalamic neurons, controls energy expenditure acting as a negative regulator of white adipose tissue lipolysis and sympathetic tone to fine-tune energy homeostasis. Following activation by ALKAL2 ligand at the cell surface, transduces an extracellular signal into an intracellular response. In contrast, ALKAL1 is not a potent physiological ligand for ALK. Ligand-binding to the extracellular domain induces tyrosine kinase activation, leading to activation of the mitogen-activated protein kinase (MAPK) pathway. Phosphorylates almost exclusively at the first tyrosine of the Y-x-x-x-Y-Y motif. Induces tyrosine phosphorylation of CBL, FRS2, IRS1 and SHC1, as well as of the MAP kinases MAPK1/ERK2 and MAPK3/ERK1. ALK activation may also be regulated by pleiotrophin (PTN) and midkine (MDK). PTN-binding induces MAPK pathway activation, which is important for the anti-apoptotic signaling of PTN and regulation of cell proliferation. MDK-binding induces phosphorylation of the ALK target insulin receptor substrate (IRS1), activates mitogen-activated protein kinases (MAPKs) and PI3-kinase, resulting also in cell proliferation induction. Drives NF-kappa-B activation, probably through IRS1 and the activation of the AKT serine/threonine kinase. Recruitment of IRS1 to activated ALK and the activation of NF-kappa-B are essential for the autocrine growth and survival signaling of MDK. The sequence is that of ALK tyrosine kinase receptor from Homo sapiens (Human).